A 120-amino-acid polypeptide reads, in one-letter code: Ribonuclease P protein component (120 aa).

Belongs to the RnpA family. As to quaternary structure, consists of a catalytic RNA component (M1 or rnpB) and a protein subunit.

The enzyme catalyses Endonucleolytic cleavage of RNA, removing 5'-extranucleotides from tRNA precursor.. In terms of biological role, RNaseP catalyzes the removal of the 5'-leader sequence from pre-tRNA to produce the mature 5'-terminus. It can also cleave other RNA substrates such as 4.5S RNA. The protein component plays an auxiliary but essential role in vivo by binding to the 5'-leader sequence and broadening the substrate specificity of the ribozyme. This Blochmanniella floridana protein is Ribonuclease P protein component.